Consider the following 424-residue polypeptide: Adenosylmethionine-8-amino-7-oxononanoate aminotransferase (424 aa).

Residue tryptophan 46 coordinates substrate. 106–107 (GS) lines the pyridoxal 5'-phosphate pocket. Tyrosine 138 lines the substrate pocket. A pyridoxal 5'-phosphate-binding site is contributed by aspartate 240. The substrate site is built by lysine 269 and glycine 303. Residue lysine 269 is modified to N6-(pyridoxal phosphate)lysine. Pyridoxal 5'-phosphate is bound at residue 304–305 (HS). Residue arginine 391 coordinates substrate.

This sequence belongs to the class-III pyridoxal-phosphate-dependent aminotransferase family. BioA subfamily. As to quaternary structure, homodimer. Pyridoxal 5'-phosphate serves as cofactor.

Its subcellular location is the cytoplasm. The enzyme catalyses (8S)-8-amino-7-oxononanoate + S-adenosyl-L-methionine = S-adenosyl-4-methylsulfanyl-2-oxobutanoate + (7R,8S)-7,8-diammoniononanoate. Its pathway is cofactor biosynthesis; biotin biosynthesis; 7,8-diaminononanoate from 8-amino-7-oxononanoate (SAM route): step 1/1. In terms of biological role, catalyzes the transfer of the alpha-amino group from S-adenosyl-L-methionine (SAM) to 7-keto-8-aminopelargonic acid (KAPA) to form 7,8-diaminopelargonic acid (DAPA). It is the only aminotransferase known to utilize SAM as an amino donor. Complements a bioU deletion in Synechocystis PCC 6803. The polypeptide is Adenosylmethionine-8-amino-7-oxononanoate aminotransferase (Synechococcus elongatus (strain ATCC 33912 / PCC 7942 / FACHB-805) (Anacystis nidulans R2)).